Consider the following 206-residue polypeptide: Protein MIS12 homolog (206 aa).

The stretch at 102-206 (DKCQETNPFS…EKESRRLETQ (105 aa)) forms a coiled coil.

This sequence belongs to the mis12 family. Component of the MIS12 complex composed of MIS12, DSN1, NSL1 and PMF1. Also interacts with KNL1, CBX3, CBX5, NDC80 and ZWINT.

Its subcellular location is the chromosome. It is found in the centromere. It localises to the kinetochore. Functionally, part of the MIS12 complex which is required for normal chromosome alignment and segregation and for kinetochore formation during mitosis. Essential for proper kinetochore microtubule attachments. The sequence is that of Protein MIS12 homolog from Mus musculus (Mouse).